The chain runs to 334 residues: Holliday junction branch migration complex subunit RuvB (334 aa).

The tract at residues 4–184 (ADRLIQPQIQ…FGIPLRLEFY (181 aa)) is large ATPase domain (RuvB-L). ATP-binding positions include R24, G65, K68, T69, T70, 131–133 (EDY), R174, Y184, and R221. T69 provides a ligand contact to Mg(2+). The small ATPAse domain (RuvB-S) stretch occupies residues 185 to 255 (NIKDLSTIVT…VAEHALDLLD (71 aa)). The segment at 258–334 (SEGFDYMDRK…YQHFELIKPE (77 aa)) is head domain (RuvB-H). Positions 294, 313, and 318 each coordinate DNA.

The protein belongs to the RuvB family. As to quaternary structure, homohexamer. Forms an RuvA(8)-RuvB(12)-Holliday junction (HJ) complex. HJ DNA is sandwiched between 2 RuvA tetramers; dsDNA enters through RuvA and exits via RuvB. An RuvB hexamer assembles on each DNA strand where it exits the tetramer. Each RuvB hexamer is contacted by two RuvA subunits (via domain III) on 2 adjacent RuvB subunits; this complex drives branch migration. In the full resolvosome a probable DNA-RuvA(4)-RuvB(12)-RuvC(2) complex forms which resolves the HJ.

Its subcellular location is the cytoplasm. The enzyme catalyses ATP + H2O = ADP + phosphate + H(+). In terms of biological role, the RuvA-RuvB-RuvC complex processes Holliday junction (HJ) DNA during genetic recombination and DNA repair, while the RuvA-RuvB complex plays an important role in the rescue of blocked DNA replication forks via replication fork reversal (RFR). RuvA specifically binds to HJ cruciform DNA, conferring on it an open structure. The RuvB hexamer acts as an ATP-dependent pump, pulling dsDNA into and through the RuvAB complex. RuvB forms 2 homohexamers on either side of HJ DNA bound by 1 or 2 RuvA tetramers; 4 subunits per hexamer contact DNA at a time. Coordinated motions by a converter formed by DNA-disengaged RuvB subunits stimulates ATP hydrolysis and nucleotide exchange. Immobilization of the converter enables RuvB to convert the ATP-contained energy into a lever motion, pulling 2 nucleotides of DNA out of the RuvA tetramer per ATP hydrolyzed, thus driving DNA branch migration. The RuvB motors rotate together with the DNA substrate, which together with the progressing nucleotide cycle form the mechanistic basis for DNA recombination by continuous HJ branch migration. Branch migration allows RuvC to scan DNA until it finds its consensus sequence, where it cleaves and resolves cruciform DNA. The chain is Holliday junction branch migration complex subunit RuvB from Shewanella baltica (strain OS195).